A 98-amino-acid polypeptide reads, in one-letter code: Large ribosomal subunit protein eL30 (98 aa).

The protein belongs to the eukaryotic ribosomal protein eL30 family.

This chain is Large ribosomal subunit protein eL30 (rpl30e), found in Methanothermobacter thermautotrophicus (strain ATCC 29096 / DSM 1053 / JCM 10044 / NBRC 100330 / Delta H) (Methanobacterium thermoautotrophicum).